Consider the following 315-residue polypeptide: Methionyl-tRNA formyltransferase (315 aa).

113-116 contributes to the (6S)-5,6,7,8-tetrahydrofolate binding site; it reads SILP.

It belongs to the Fmt family.

It catalyses the reaction L-methionyl-tRNA(fMet) + (6R)-10-formyltetrahydrofolate = N-formyl-L-methionyl-tRNA(fMet) + (6S)-5,6,7,8-tetrahydrofolate + H(+). Attaches a formyl group to the free amino group of methionyl-tRNA(fMet). The formyl group appears to play a dual role in the initiator identity of N-formylmethionyl-tRNA by promoting its recognition by IF2 and preventing the misappropriation of this tRNA by the elongation apparatus. The sequence is that of Methionyl-tRNA formyltransferase from Vibrio cholerae serotype O1 (strain M66-2).